The primary structure comprises 651 residues: Ion-translocating oxidoreductase complex subunit C (651 aa).

4Fe-4S ferredoxin-type domains lie at 368-398 and 408-437; these read EYAE…QQLY and KSEE…IQYF. [4Fe-4S] cluster contacts are provided by cysteine 378, cysteine 381, cysteine 384, cysteine 388, cysteine 417, cysteine 420, cysteine 423, and cysteine 427. 2 stretches are compositionally biased toward basic and acidic residues: residues 465–477 and 485–513; these read QARM…ERKA and ARRE…KANE. Disordered stretches follow at residues 465 to 565 and 583 to 624; these read QARM…QPTD and LAQA…DPKK. 2 stretches are compositionally biased toward polar residues: residues 554-564 and 587-600; these read VENQEQQTQPT and NSTS…QTAE. Over residues 602–614 the composition is skewed to basic and acidic residues; the sequence is EVEKTKSAVEKTQ.

The protein belongs to the 4Fe4S bacterial-type ferredoxin family. RnfC subfamily. As to quaternary structure, the complex is composed of six subunits: RnfA, RnfB, RnfC, RnfD, RnfE and RnfG. [4Fe-4S] cluster serves as cofactor.

The protein localises to the cell inner membrane. Its function is as follows. Part of a membrane-bound complex that couples electron transfer with translocation of ions across the membrane. The protein is Ion-translocating oxidoreductase complex subunit C of Haemophilus influenzae (strain PittEE).